We begin with the raw amino-acid sequence, 904 residues long: MAAAGGAEGRRAALEAAAAAAPERGGGSCVLCCGDLEATALGRCDHPVCYRCSTKMRVLCEQRYCAVCREELRQVVFGKKLPAFATIPIHQLQHEKKYDIYFADGKVYALYRQLLQHECPRCPELPPFSLFGDLEQHMRRQHELFCCRLCLQHLQIFTYERKWYSRKDLARHRMQGDPDDTSHRGHPLCKFCDERYLDNDELLKHLRRDHYFCHFCDSDGAQDYYSDYAYLREHFREKHFLCEEGRCSTEQFTHAFRTEIDLKAHRTACHSRSRAEARQNRHIDLQFSYAPRHSRRNEGVVGGEDYEEVDRYSRQGRVARAGTRGAQQSRRGSWRYKREEEDREVAAAVRASVAAQQQEEARRSEDQEEGGRPKKEEAAARGPEDPRGPRRSPRTQGEGPGPKETSTNGPVSQEAFSVTGPAAPGCVGVPGALPPPSPKLKDEDFPSLSASTSSSCSTAATPGPVGLALPYAIPARGRSAFQEEDFPALVSSVPKPGTAPTSLVSAWNSSSSSKKVAQPPLSAQATGSGQPTRKAGKGSRGGRKGGPPFTQEEEEDGGPALQELLSTRPTGSVSSTLGLASIQPSKVGKKKKVGSEKPGTTLPQPPPATCPPGALQAPEAPASRAEGPVAVVVNGHTEGPAPARSAPKEPPGLPRPLGSFPCPTPQEDFPALGGPCPPRMPPPPGFSAVVLLKGTPPPPPPGLVPPISKPPPGFSGLLPSPHPACVPSPATTTTTKAPRLLPAPRAYLVPENFRERNLQLIQSIRDFLQSDEARFSEFKSHSGEFRQGLISAAQYYKSCRDLLGENFQKVFNELLVLLPDTAKQQELLSAHTDFCNREKPLSTKSKKNKKSAWQATTQQAGLDCRVCPTCQQVLAHGDASSHQALHAARDDDFPSLQAIARIIT.

Residues 29–69 form an RING-type zinc finger; the sequence is CVLCCGDLEATALGRCDHPVCYRCSTKMRVLCEQRYCAVCR. Residues 187 to 210 form a C2H2-type zinc finger; it reads PLCKFCDERYLDNDELLKHLRRDH. Position 306 is a phosphotyrosine (Tyr-306). Disordered regions lie at residues 312 to 469 and 490 to 656; these read YSRQ…GLAL and VSSV…LPRP. Over residues 346-358 the composition is skewed to low complexity; sequence AAAVRASVAAQQQ. The segment covering 359 to 388 has biased composition (basic and acidic residues); it reads EEARRSEDQEEGGRPKKEEAAARGPEDPRG. The span at 404-416 shows a compositional bias: polar residues; that stretch reads ETSTNGPVSQEAF. Residues 418 to 431 are compositionally biased toward low complexity; the sequence is VTGPAAPGCVGVPG. Residues Gly-428, Gly-431, and Ser-437 each carry the phosphoserine modification. Low complexity-rich tracts occupy residues 447-461 and 502-513; these read SLSA…TAAT and SLVSAWNSSSSS. Residues 521–531 are compositionally biased toward polar residues; that stretch reads LSAQATGSGQP. Residues 534-543 are compositionally biased toward basic residues; it reads KAGKGSRGGR. Residues 564-584 are compositionally biased toward polar residues; it reads LLSTRPTGSVSSTLGLASIQP.

It belongs to the ZNF598/HEL2 family. In terms of assembly, interacts with the E2 ubiquitin-conjugating enzyme UBE2D3. Component of the 4EHP-GYF2 complex, at least composed of EIF4E2, GIGYF2 and ZNF598.

Its subcellular location is the cytoplasm. The protein resides in the cytosol. The enzyme catalyses S-ubiquitinyl-[E2 ubiquitin-conjugating enzyme]-L-cysteine + [acceptor protein]-L-lysine = [E2 ubiquitin-conjugating enzyme]-L-cysteine + N(6)-ubiquitinyl-[acceptor protein]-L-lysine.. It participates in protein modification; protein ubiquitination. Functionally, E3 ubiquitin-protein ligase that plays a key role in the ribosome quality control (RQC), a pathway that takes place when a ribosome has stalled during translation, leading to degradation of nascent peptide chains. ZNF598 is activated when ribosomes are stalled within an mRNA following translation of prematurely polyadenylated mRNAs. Acts as a ribosome collision sensor: specifically recognizes and binds collided di-ribosome, which arises when a trailing ribosome encounters a slower leading ribosome, leading to terminally arrest translation. Following binding to colliding ribosomes, mediates monoubiquitination of 40S ribosomal proteins RPS10/eS10 and RPS3/uS3, and 'Lys-63'-linked polyubiquitination of RPS20/uS10. Polyubiquitination of RPS20/uS10 promotes recruitment of the RQT (ribosome quality control trigger) complex, which drives the disassembly of stalled ribosomes, followed by degradation of nascent peptides. E3 ubiquitin-protein ligase activity is dependent on the E2 ubiquitin-conjugating enzyme UBE2D3. Also acts as an adapter that recruits the 4EHP-GYF2 complex to mRNAs. Independently of its role in RQC, may also act as a negative regulator of interferon-stimulated gene (ISG) expression. In terms of biological role, (Microbial infection) Required for poxvirus protein synthesis by mediating ubiquitination of RPS10/eS10 and RPS20/uS10. Poxvirus encoding mRNAs contain unusual 5' poly(A) leaders and ZNF598 is required for their translational efficiency, possibly via its ability to suppress readthrough or sliding on shorter poly(A) tracts. This chain is E3 ubiquitin-protein ligase ZNF598, found in Homo sapiens (Human).